We begin with the raw amino-acid sequence, 431 residues long: Trigger factor (431 aa).

Residues 161 to 245 (TDIVIGDVQK…VKEIKRMELP (85 aa)) enclose the PPIase FKBP-type domain.

The protein belongs to the FKBP-type PPIase family. Tig subfamily.

It is found in the cytoplasm. It catalyses the reaction [protein]-peptidylproline (omega=180) = [protein]-peptidylproline (omega=0). Its function is as follows. Involved in protein export. Acts as a chaperone by maintaining the newly synthesized protein in an open conformation. Functions as a peptidyl-prolyl cis-trans isomerase. The protein is Trigger factor of Chloroherpeton thalassium (strain ATCC 35110 / GB-78).